The primary structure comprises 290 residues: Acetyl-coenzyme A carboxylase carboxyl transferase subunit beta (290 aa).

Residues 28-290 (VMTKCPQCKK…KGGEEGWWRN (263 aa)) enclose the CoA carboxyltransferase N-terminal domain. The Zn(2+) site is built by C32, C35, C51, and C54. A C4-type zinc finger spans residues 32–54 (CPQCKKIMYTKELIKNLRVCLSC).

Belongs to the AccD/PCCB family. Acetyl-CoA carboxylase is a heterohexamer composed of biotin carboxyl carrier protein (AccB), biotin carboxylase (AccC) and two subunits each of ACCase subunit alpha (AccA) and ACCase subunit beta (AccD). Zn(2+) serves as cofactor.

The protein resides in the cytoplasm. It carries out the reaction N(6)-carboxybiotinyl-L-lysyl-[protein] + acetyl-CoA = N(6)-biotinyl-L-lysyl-[protein] + malonyl-CoA. It functions in the pathway lipid metabolism; malonyl-CoA biosynthesis; malonyl-CoA from acetyl-CoA: step 1/1. Component of the acetyl coenzyme A carboxylase (ACC) complex. Biotin carboxylase (BC) catalyzes the carboxylation of biotin on its carrier protein (BCCP) and then the CO(2) group is transferred by the transcarboxylase to acetyl-CoA to form malonyl-CoA. The sequence is that of Acetyl-coenzyme A carboxylase carboxyl transferase subunit beta from Geobacillus kaustophilus (strain HTA426).